A 191-amino-acid chain; its full sequence is Inosine triphosphate pyrophosphatase (191 aa).

Residue 15-20 coordinates ITP; that stretch reads TGNTNK. Mg(2+) is bound at residue Glu43. Residues Lys55, 71–72, Lys88, 147–150, Lys168, and 173–174 contribute to the ITP site; these read DT, FGWD, and HR.

Belongs to the HAM1 NTPase family. As to quaternary structure, homodimer. Requires Mg(2+) as cofactor. Mn(2+) is required as a cofactor.

It is found in the cytoplasm. The protein localises to the nucleus. It carries out the reaction ITP + H2O = IMP + diphosphate + H(+). The catalysed reaction is dITP + H2O = dIMP + diphosphate + H(+). It catalyses the reaction XTP + H2O = XMP + diphosphate + H(+). Functionally, pyrophosphatase that hydrolyzes non-canonical purine nucleotides such as inosine triphosphate (ITP), deoxyinosine triphosphate (dITP) or xanthosine 5'-triphosphate (XTP) to their respective monophosphate derivatives. The enzyme does not distinguish between the deoxy- and ribose forms. Probably excludes non-canonical purines from RNA and DNA precursor pools, thus preventing their incorporation into RNA and DNA and avoiding chromosomal lesions. The protein is Inosine triphosphate pyrophosphatase of Chaetomium globosum (strain ATCC 6205 / CBS 148.51 / DSM 1962 / NBRC 6347 / NRRL 1970) (Soil fungus).